We begin with the raw amino-acid sequence, 282 residues long: Bifunctional protein FolD (282 aa).

NADP(+) is bound by residues 164–166 (GAS), isoleucine 189, and isoleucine 230.

It belongs to the tetrahydrofolate dehydrogenase/cyclohydrolase family. As to quaternary structure, homodimer.

The enzyme catalyses (6R)-5,10-methylene-5,6,7,8-tetrahydrofolate + NADP(+) = (6R)-5,10-methenyltetrahydrofolate + NADPH. It catalyses the reaction (6R)-5,10-methenyltetrahydrofolate + H2O = (6R)-10-formyltetrahydrofolate + H(+). It functions in the pathway one-carbon metabolism; tetrahydrofolate interconversion. Catalyzes the oxidation of 5,10-methylenetetrahydrofolate to 5,10-methenyltetrahydrofolate and then the hydrolysis of 5,10-methenyltetrahydrofolate to 10-formyltetrahydrofolate. This Nitratiruptor sp. (strain SB155-2) protein is Bifunctional protein FolD.